Consider the following 206-residue polypeptide: Small ribosomal subunit protein uS4 (206 aa).

In terms of domain architecture, S4 RNA-binding spans 96–156; the sequence is TRLDNVVYRM…EKSKTQARII (61 aa).

It belongs to the universal ribosomal protein uS4 family. In terms of assembly, part of the 30S ribosomal subunit. Contacts protein S5. The interaction surface between S4 and S5 is involved in control of translational fidelity.

Its function is as follows. One of the primary rRNA binding proteins, it binds directly to 16S rRNA where it nucleates assembly of the body of the 30S subunit. In terms of biological role, with S5 and S12 plays an important role in translational accuracy. The sequence is that of Small ribosomal subunit protein uS4 from Colwellia psychrerythraea (strain 34H / ATCC BAA-681) (Vibrio psychroerythus).